Here is a 288-residue protein sequence, read N- to C-terminus: Putative alkaline ceramidase dcd3A (288 aa).

Asn23 is a glycosylation site (N-linked (GlcNAc...) asparagine). The next 7 membrane-spanning stretches (helical) occupy residues 41 to 61 (IISLFGIYGIWIMMPNFGTGV), 78 to 98 (VILSYISLIVVGVGSAFYHAT), 105 to 125 (LFDELPMIYTALIMLYIMVTV), 146 to 166 (HLLPYLLIAYGLFVTITILVI), 172 to 192 (ILQVSFGALVFYVVFHSIYLI), 206 to 226 (SYLYKYAFVSMLVGFTCWVVE), and 240 to 260 (LHAFWHFFTGMSTYVWTQFLI).

Belongs to the alkaline ceramidase family.

The protein resides in the membrane. The chain is Putative alkaline ceramidase dcd3A (dcd3A) from Dictyostelium discoideum (Social amoeba).